The sequence spans 222 residues: Transmembrane protein 114 (222 aa).

The chain crosses the membrane as a helical span at residues 7-27 (ALAGAAALSGALSFVLLAAAI). Asparagine 54 and asparagine 88 each carry an N-linked (GlcNAc...) asparagine glycan. Helical transmembrane passes span 105–125 (FVILLPLSLIVMVFGGMTGFL), 133–153 (LLLLLTGILFLFGAMVTLTGI), and 188–208 (LALGWISFVSELLTGVVFLAA).

Its subcellular location is the cell junction. The protein resides in the tight junction. The protein localises to the lateral cell membrane. It is found in the apical cell membrane. This is Transmembrane protein 114 from Mus musculus (Mouse).